A 226-amino-acid chain; its full sequence is CASP-like protein 2BC1 (226 aa).

Over 1–37 (MRKHIDIVFSRLSGPILNPPPDNNVIPKTDRKLRITE) the chain is Cytoplasmic. Residues 38 to 58 (VILRFAVVIFALVSAIMVGTA) form a helical membrane-spanning segment. The Extracellular segment spans residues 59-78 (SGTRDLGGGIRIHAHFTLLK). Residues 79–99 (TLPFLVIVDGILAVYSLLQGL) traverse the membrane as a helical segment. Residues 100 to 114 (RCFLSLYMRHILLNK) lie on the Cytoplasmic side of the membrane. Residues 115-135 (ALAWTIFCCDQALAYVIFAAA) form a helical membrane-spanning segment. Over 136–170 (ASTAETAYISEQGLDELQWIKVCMFFRAYCFKSGA) the chain is Extracellular. Residues 171–191 (GMINAFLAALCMVFVSGMSVF) traverse the membrane as a helical segment. The Cytoplasmic portion of the chain corresponds to 192-226 (HLFRLYGEKRAYGHIAEQVVISEEAAERRNSLNGI).

It belongs to the Casparian strip membrane proteins (CASP) family. As to quaternary structure, homodimer and heterodimers.

It is found in the cell membrane. The sequence is that of CASP-like protein 2BC1 from Picea sitchensis (Sitka spruce).